The sequence spans 345 residues: Biotin synthase (345 aa).

Positions 38-256 (GEVQVSTLLS…IAVARIMMPR (219 aa)) constitute a Radical SAM core domain. [4Fe-4S] cluster-binding residues include C53, C57, and C60. [2Fe-2S] cluster contacts are provided by C97, C128, C188, and R260.

The protein belongs to the radical SAM superfamily. Biotin synthase family. In terms of assembly, homodimer. [4Fe-4S] cluster is required as a cofactor. The cofactor is [2Fe-2S] cluster.

It catalyses the reaction (4R,5S)-dethiobiotin + (sulfur carrier)-SH + 2 reduced [2Fe-2S]-[ferredoxin] + 2 S-adenosyl-L-methionine = (sulfur carrier)-H + biotin + 2 5'-deoxyadenosine + 2 L-methionine + 2 oxidized [2Fe-2S]-[ferredoxin]. Its pathway is cofactor biosynthesis; biotin biosynthesis; biotin from 7,8-diaminononanoate: step 2/2. Functionally, catalyzes the conversion of dethiobiotin (DTB) to biotin by the insertion of a sulfur atom into dethiobiotin via a radical-based mechanism. This is Biotin synthase from Sodalis glossinidius (strain morsitans).